A 340-amino-acid polypeptide reads, in one-letter code: Putative RRN3-like protein RRN3P2 (340 aa).

It belongs to the RRN3 family.

The chain is Putative RRN3-like protein RRN3P2 (RRN3P2) from Homo sapiens (Human).